Here is a 499-residue protein sequence, read N- to C-terminus: MRVIMKPLRRTLVFFIFSVFLCGTVSARQIEWQSCMTSPYSDWFGKESSSPELLCGYLSVPLKYTDTGKDVSDENIPLVRLAMTKLPAKSKRKGSVIIISGGPGLPGINPYINFDWPVTNLRESWDIIGFDPRGVGQSFPAINCQQSNQERLVNVSEKQLILQKINACIHNTGAEVIRHIGSHEAVYDIERIRQALGDKQLTAVAYSYGTQIAALYAERFPSSIRSIVFDGVVDIDDLNDNFSWKLRQAHSYQETFDRFAAWCARTKSCPLSSDRNQAIHQFHQLLLKLHNSPLTDSRGESISSDDLISLTTELLLWRSSWPTLATAVRQFSQGIVSNEIETALNSSIASEKVSDALGVILCVDQSDEQLSQEQRKSRKKALADAFPAVNFEREQSDLPEFCELWPIHRDLQQTRLKNTVLPSGLLFVAHKYDPTTPWINARKMADKFSAPLLTINGDGHTLALAGTNLCVDEAVVRHLLFPGKSEDITCQGSGTGDTN.

The first 26 residues, 1-26 (MRVIMKPLRRTLVFFIFSVFLCGTVS), serve as a signal peptide directing secretion. In terms of domain architecture, AB hydrolase-1 spans 94–393 (GSVIIISGGP…DAFPAVNFER (300 aa)). Residue serine 207 is the Nucleophile of the active site. Aspartate 433 is a catalytic residue. The active-site Proton donor is histidine 460.

This sequence belongs to the peptidase S33 family.

The polypeptide is Putative hydrolase YuaR (yuaR) (Escherichia coli (strain K12)).